The primary structure comprises 295 residues: 4-hydroxybenzoate octaprenyltransferase (295 aa).

A run of 8 helical transmembrane segments spans residues 28–48, 55–75, 103–123, 147–167, 175–195, 219–239, 241–261, and 275–295; these read PIGIYLLLWPTLWAVWIAADG, VLIFTCGVILMRSAGCVINDF, WALFAVLVALSFGLVLLTDPF, LPQLVLGAAYSWGIPMAFTAA, AWLIFAANLAWTVAYDTYYAM, AIILALQGLTLGLLLVVGMRL, LGPYFHLGLLVAALCFAWEFV, and FLHNHWAGLAILVGLILDYGI.

It belongs to the UbiA prenyltransferase family. Mg(2+) serves as cofactor.

It localises to the cell inner membrane. The catalysed reaction is all-trans-octaprenyl diphosphate + 4-hydroxybenzoate = 4-hydroxy-3-(all-trans-octaprenyl)benzoate + diphosphate. The protein operates within cofactor biosynthesis; ubiquinone biosynthesis. In terms of biological role, catalyzes the prenylation of para-hydroxybenzoate (PHB) with an all-trans polyprenyl group. Mediates the second step in the final reaction sequence of ubiquinone-8 (UQ-8) biosynthesis, which is the condensation of the polyisoprenoid side chain with PHB, generating the first membrane-bound Q intermediate 3-octaprenyl-4-hydroxybenzoate. The protein is 4-hydroxybenzoate octaprenyltransferase of Azotobacter vinelandii (strain DJ / ATCC BAA-1303).